Here is a 72-residue protein sequence, read N- to C-terminus: MKKDIHPKAVPAKIIYQGKVVMETLSTRPEIHVDVWSGAHPFWTGEERFVDTEGRVDKFNKRFGDSYRKNRK.

It belongs to the bacterial ribosomal protein bL31 family. Type A subfamily. In terms of assembly, part of the 50S ribosomal subunit.

Binds the 23S rRNA. The polypeptide is Large ribosomal subunit protein bL31 (Deinococcus geothermalis (strain DSM 11300 / CIP 105573 / AG-3a)).